A 489-amino-acid chain; its full sequence is Cysteine--tRNA ligase (489 aa).

Zn(2+) is bound at residue Cys-27. A 'HIGH' region motif is present at residues 29–39; it reads VTVYDLCHLGH. Zn(2+)-binding residues include Cys-211, His-236, and Glu-240. Positions 268 to 272 match the 'KMSKS' region motif; it reads KMSKS. Lys-271 provides a ligand contact to ATP.

Belongs to the class-I aminoacyl-tRNA synthetase family. In terms of assembly, monomer. Zn(2+) serves as cofactor.

It is found in the cytoplasm. It catalyses the reaction tRNA(Cys) + L-cysteine + ATP = L-cysteinyl-tRNA(Cys) + AMP + diphosphate. This chain is Cysteine--tRNA ligase, found in Prochlorococcus marinus (strain MIT 9215).